The chain runs to 1018 residues: Thrombospondin type-1 domain-containing protein 4 (1018 aa).

Positions 1 to 26 (MVSYLTSCLSALSTLLLLLGSQLVCP) are cleaved as a signal peptide. Disordered stretches follow at residues 34 to 56 (KVPQ…SPGV), 116 to 240 (HRSQ…PSEA), and 534 to 623 (SPQV…NWKQ). Positions 54-307 (PGVWGSWGPW…YKLCNTNACP (254 aa)) constitute a TSP type-1 1 domain. Residues 187-199 (QRLRRQRPSSRHS) are compositionally biased toward basic residues. Over residues 216-230 (HQFSHSQPLYQSDSG) the composition is skewed to polar residues. Composition is skewed to basic and acidic residues over residues 558-573 (QEDR…KEDS) and 592-603 (RHPERFPSHRPD). TSP type-1 domains lie at 676 to 737 (CPAF…KICS), 739 to 792 (WQIR…DMGP), 793 to 851 (CAKS…GPCT), 852 to 911 (GKVE…HLKP), and 912 to 968 (CGAK…QDCV). The PLAC domain maps to 971 to 1008 (VDENCKDKYYNCNVVVQARLCVYNYYKTACCASCTRVA).

In terms of assembly, isoform 2 interacts with FBN1. Isoform 2 may interact with TGFB1. As to expression, both isoforms are expressed in the embryo from 7 dpc through 17. Isoform 1 is widely expressed in adult tissues. Isoform 2 is detected in brain, spinal cord, eye, kidney, stomach and uterus. Mainly observed in fibrillar extracellular matrices in elastic tissues (at protein level).

The protein resides in the secreted. It localises to the extracellular space. Its subcellular location is the extracellular matrix. Functionally, promotes FBN1 matrix assembly. Attenuates TGFB signaling, possibly by accelerating the sequestration of large latent complexes of TGFB or active TGFB by FBN1 microfibril assembly, thereby negatively regulating the expression of TGFB regulatory targets, such as POSTN. The polypeptide is Thrombospondin type-1 domain-containing protein 4 (Thsd4) (Mus musculus (Mouse)).